The sequence spans 160 residues: Protein cornichon homolog 2 (160 aa).

The Cytoplasmic segment spans residues 1–10 (MAFTFAAFCY). Residues 11-31 (MLTLVLCASLIFFVIWHIIAF) traverse the membrane as a helical segment. Topologically, residues 32-72 (DELRTDFKNPIDQGNPARARERLKNIERICCLLRKLVVPEY) are lumenal. Residues 73–93 (CIHGLFCLMFLCAAEWVTLGL) form a helical membrane-spanning segment. Residues 94–138 (NLPLLLYHLWRYFHRPSDGSEGLFDAVSIMDADILGYCQKEAWCK) lie on the Cytoplasmic side of the membrane. A helical transmembrane segment spans residues 139–159 (LAFYLLSFFYYLYSMVYTLVS). Position 160 (F160) is a topological domain, lumenal.

Belongs to the cornichon family. In terms of assembly, interacts with HBEGF. As to expression, expressed in the odd-numbered neuromeres (r3 and r5) of the developing hindbrain.

The protein localises to the membrane. Regulates the trafficking and gating properties of AMPA-selective glutamate receptors (AMPARs). Plays an important role in the proper development of cranial nerves by facilitating the secretion of HBEGF. This is Protein cornichon homolog 2 (CNIH2) from Gallus gallus (Chicken).